Here is a 150-residue protein sequence, read N- to C-terminus: Transmembrane protein 35B (150 aa).

A signal peptide spans 1–21 (MSFRVGVLRVLLGVFFALTGA). 3 consecutive transmembrane segments (helical) span residues 62 to 82 (TAVG…PPVL), 84 to 104 (EISN…LVVL), and 111 to 131 (YVPA…HFLA).

The protein belongs to the DoxX family.

Its subcellular location is the membrane. The polypeptide is Transmembrane protein 35B (Mus musculus (Mouse)).